The following is a 633-amino-acid chain: Histone-lysine N-methyltransferase Su(var)3-9 (633 aa).

The Chromo domain occupies 213 to 271; that stretch reads YIVEKIESVEVVQFQPVFFVKWLGYDVSANTWESYVNLSDCAEMEKFVERHLQLHQHYI. In terms of domain architecture, Pre-SET spans 407 to 472; that stretch reads VGCMCRHQSG…SCTNRVVQNG (66 aa). Cys409, Cys411, Cys419, Cys425, Cys426, Cys454, Cys458, Cys460, and Cys464 together coordinate Zn(2+). The SET domain occupies 475-601; that stretch reads HPLVLFKTSN…AGEELSFDYI (127 aa). S-adenosyl-L-methionine contacts are provided by residues 486-488, Tyr529, and 558-559; these read SGW and NH. Zn(2+) contacts are provided by Cys561, Cys621, Cys623, and Cys628. A Post-SET domain is found at 617-633; it reads ARVQCRCGAANCRKVLF.

Belongs to the class V-like SAM-binding methyltransferase superfamily. Histone-lysine methyltransferase family. Suvar3-9 subfamily. Interacts with Su(var)205 and Su(var)3-7. Probably associates with HDAC1/Rpd3.

Its subcellular location is the nucleus. It is found in the chromosome. It localises to the centromere. It catalyses the reaction L-lysyl(9)-[histone H3] + 3 S-adenosyl-L-methionine = N(6),N(6),N(6)-trimethyl-L-lysyl(9)-[histone H3] + 3 S-adenosyl-L-homocysteine + 3 H(+). Its function is as follows. Histone methyltransferase that specifically trimethylates 'Lys-9' of histone H3 using monomethylated H3 'Lys-9' as substrate. H3 'Lys-9' trimethylation represents a specific tag for epigenetic transcriptional repression by recruiting Su(var)205/HP1 to methylated histones. Mainly functions in heterochromatin regions, thereby playing a central role in the establishment of constitutive heterochromatin at pericentric regions. Involved in heterochromatic gene silencing including the modification of position-effect-variegation. The polypeptide is Histone-lysine N-methyltransferase Su(var)3-9 (Su(var)3-9) (Drosophila pseudoobscura pseudoobscura (Fruit fly)).